The chain runs to 84 residues: Delta-conotoxin-like Bt6.4 (84 aa).

The signal sequence occupies residues 1–22; that stretch reads MKLTCMVIVAVLFLTAWTSVMA. The propeptide occupies 23–57; it reads DGSINRPDIAEGWQKFFSKARDEMKNRAASELNKR. 3 disulfide bridges follow: cysteine 58/cysteine 74, cysteine 65/cysteine 78, and cysteine 73/cysteine 82.

Belongs to the conotoxin O1 superfamily. In terms of tissue distribution, expressed by the venom duct.

It localises to the secreted. This toxin activates voltage-gated sodium channels. It shifts the voltage-dependence of activation to more hyperpolarized potentials but has only little effect on channel inactivation. It is active on Nav1.3/SCN3A (EC(50)=3.98 nM), Nav1.4/SCN4A (EC(50)=4.99 nM), Nav1.6/SCN8A (EC(50)=1.27 nM) and Nav1.7/SCN9A (EC(50)=2.42 nM) voltage-gated sodium channels. In vivo, it induces nocifensive or pain-like behaviors in mice when injected intraplantarly. The polypeptide is Delta-conotoxin-like Bt6.4 (Conus betulinus (Beech cone)).